The chain runs to 362 residues: Methylthioribose-1-phosphate isomerase (362 aa).

The Proton donor role is filled by Asp252.

Belongs to the eIF-2B alpha/beta/delta subunits family. MtnA subfamily.

It localises to the cytoplasm. Its subcellular location is the nucleus. The catalysed reaction is 5-(methylsulfanyl)-alpha-D-ribose 1-phosphate = 5-(methylsulfanyl)-D-ribulose 1-phosphate. The protein operates within amino-acid biosynthesis; L-methionine biosynthesis via salvage pathway; L-methionine from S-methyl-5-thio-alpha-D-ribose 1-phosphate: step 1/6. Functionally, catalyzes the interconversion of methylthioribose-1-phosphate (MTR-1-P) into methylthioribulose-1-phosphate (MTRu-1-P). In Drosophila mojavensis (Fruit fly), this protein is Methylthioribose-1-phosphate isomerase.